The chain runs to 248 residues: Aspartate/glutamate leucyltransferase (248 aa).

This sequence belongs to the R-transferase family. Bpt subfamily.

It is found in the cytoplasm. The enzyme catalyses N-terminal L-glutamyl-[protein] + L-leucyl-tRNA(Leu) = N-terminal L-leucyl-L-glutamyl-[protein] + tRNA(Leu) + H(+). It carries out the reaction N-terminal L-aspartyl-[protein] + L-leucyl-tRNA(Leu) = N-terminal L-leucyl-L-aspartyl-[protein] + tRNA(Leu) + H(+). Its function is as follows. Functions in the N-end rule pathway of protein degradation where it conjugates Leu from its aminoacyl-tRNA to the N-termini of proteins containing an N-terminal aspartate or glutamate. This chain is Aspartate/glutamate leucyltransferase, found in Polynucleobacter asymbioticus (strain DSM 18221 / CIP 109841 / QLW-P1DMWA-1) (Polynucleobacter necessarius subsp. asymbioticus).